A 338-amino-acid polypeptide reads, in one-letter code: Nicotinate-nucleotide--dimethylbenzimidazole phosphoribosyltransferase (338 aa).

The Proton acceptor role is filled by Glu306.

This sequence belongs to the CobT family.

The catalysed reaction is 5,6-dimethylbenzimidazole + nicotinate beta-D-ribonucleotide = alpha-ribazole 5'-phosphate + nicotinate + H(+). The protein operates within nucleoside biosynthesis; alpha-ribazole biosynthesis; alpha-ribazole from 5,6-dimethylbenzimidazole: step 1/2. Catalyzes the synthesis of alpha-ribazole-5'-phosphate from nicotinate mononucleotide (NAMN) and 5,6-dimethylbenzimidazole (DMB). The sequence is that of Nicotinate-nucleotide--dimethylbenzimidazole phosphoribosyltransferase from Cereibacter sphaeroides (strain ATCC 17025 / ATH 2.4.3) (Rhodobacter sphaeroides).